The chain runs to 374 residues: tRNA-specific 2-thiouridylase MnmA (374 aa).

ATP contacts are provided by residues 15 to 22 and Met-41; that span reads GMSGGVDS. The interaction with target base in tRNA stretch occupies residues 101-103; the sequence is NPD. Catalysis depends on Cys-106, which acts as the Nucleophile. An intrachain disulfide couples Cys-106 to Cys-206. Residue Gly-130 coordinates ATP. The interaction with tRNA stretch occupies residues 156 to 158; it reads KDQ. Residue Cys-206 is the Cysteine persulfide intermediate of the active site. The segment at 324 to 325 is interaction with tRNA; that stretch reads RY.

Belongs to the MnmA/TRMU family.

Its subcellular location is the cytoplasm. It catalyses the reaction S-sulfanyl-L-cysteinyl-[protein] + uridine(34) in tRNA + AH2 + ATP = 2-thiouridine(34) in tRNA + L-cysteinyl-[protein] + A + AMP + diphosphate + H(+). Its function is as follows. Catalyzes the 2-thiolation of uridine at the wobble position (U34) of tRNA, leading to the formation of s(2)U34. The protein is tRNA-specific 2-thiouridylase MnmA of Aromatoleum aromaticum (strain DSM 19018 / LMG 30748 / EbN1) (Azoarcus sp. (strain EbN1)).